Here is a 410-residue protein sequence, read N- to C-terminus: Peptidase T (410 aa).

Histidine 78 contributes to the Zn(2+) binding site. Aspartate 80 is an active-site residue. Residue aspartate 140 participates in Zn(2+) binding. The active-site Proton acceptor is the glutamate 173. Zn(2+) contacts are provided by glutamate 174, aspartate 196, and histidine 379.

The protein belongs to the peptidase M20B family. Zn(2+) is required as a cofactor.

It is found in the cytoplasm. The enzyme catalyses Release of the N-terminal residue from a tripeptide.. In terms of biological role, cleaves the N-terminal amino acid of tripeptides. The chain is Peptidase T from Pectobacterium atrosepticum (strain SCRI 1043 / ATCC BAA-672) (Erwinia carotovora subsp. atroseptica).